A 562-amino-acid polypeptide reads, in one-letter code: MOB kinase activator-like 2 (562 aa).

Positions 30–50 are disordered; the sequence is KSGSVQGTTATATATGPPSPP. Residues 31 to 45 show a composition bias toward low complexity; sequence SGSVQGTTATATATG. Zn(2+)-binding residues include Cys-170, Cys-175, His-250, and His-255. Disordered regions lie at residues 304 to 378, 468 to 523, and 538 to 562; these read DDTS…TASA, NFSN…STTV, and GASA…SSTA. 3 stretches are compositionally biased toward low complexity: residues 305–349, 357–378, and 471–481; these read DTSG…NSTS, NSQS…TASA, and NNNNNNHNLNH. Residues 482–514 are compositionally biased toward basic residues; it reads LNHHHHHHHHQHHHQHHPHGHHGHQGHQGHQGH. Low complexity predominate over residues 547 to 562; that stretch reads AVSAATGGATSASSTA.

It belongs to the MOB1/phocein family. As to quaternary structure, interacts with and activates trc, also interacts with wts.

It localises to the cytoplasm. Its subcellular location is the nucleus. Required for the normal morphogenesis of a variety of polarized outgrowths including epidermal hairs, bristles, arista laterals, and dendrites. The sequence is that of MOB kinase activator-like 2 from Drosophila pseudoobscura pseudoobscura (Fruit fly).